The primary structure comprises 119 residues: Putative phosphoethanolamine transferase YjgX (119 aa).

2 helical membrane-spanning segments follow: residues 5–25 (VFPV…VIFW) and 94–114 (LLLS…TIPY).

Belongs to the phosphoethanolamine transferase family.

The protein localises to the cell inner membrane. This chain is Putative phosphoethanolamine transferase YjgX (yjgX), found in Escherichia coli (strain K12).